A 292-amino-acid chain; its full sequence is Elongation factor Ts (292 aa).

The segment at 79–82 is involved in Mg(2+) ion dislocation from EF-Tu; the sequence is TDFV.

Belongs to the EF-Ts family.

The protein resides in the cytoplasm. Functionally, associates with the EF-Tu.GDP complex and induces the exchange of GDP to GTP. It remains bound to the aminoacyl-tRNA.EF-Tu.GTP complex up to the GTP hydrolysis stage on the ribosome. This Xylella fastidiosa (strain Temecula1 / ATCC 700964) protein is Elongation factor Ts.